Consider the following 213-residue polypeptide: Ion-translocating oxidoreductase complex subunit A (213 aa).

Residues 1–24 lie on the Periplasmic side of the membrane; the sequence is MLLLWQSRIMPGSEANIYITMTEY. The helical transmembrane segment at 25-45 threads the bilayer; the sequence is LLLLIGTVLVNNFVLVKFLGL. Over 46-58 the chain is Cytoplasmic; that stretch reads CPFMGVSKKLETA. The chain crosses the membrane as a helical span at residues 59–79; sequence IGMGLATTFVLTLASVCAYLV. The Periplasmic portion of the chain corresponds to 80–86; sequence ESYVLRP. The chain crosses the membrane as a helical span at residues 87–107; sequence LGIEYLRTMSFILVIAVVVQF. The Cytoplasmic segment spans residues 108 to 121; sequence TEMVVHKTSPTLYR. A helical transmembrane segment spans residues 122-142; sequence LLGIFLPLITTNCAVLGVALL. Over 143–153 the chain is Periplasmic; that stretch reads NINENHNFIQS. The chain crosses the membrane as a helical span at residues 154–174; it reads IIYGFGAAVGFSLVLILFASM. Over 175–190 the chain is Cytoplasmic; sequence RERIHVADVPAPFKGA. Residues 191–211 form a helical membrane-spanning segment; the sequence is SIAMITAGLMSLAFMGFTGLV. At 212 to 213 the chain is on the periplasmic side; sequence KL.

It belongs to the NqrDE/RnfAE family. In terms of assembly, the complex is composed of six subunits: RnfA, RnfB, RnfC, RnfD, RnfE and RnfG.

The protein localises to the cell inner membrane. Its function is as follows. Part of a membrane-bound complex that couples electron transfer with translocation of ions across the membrane. This is Ion-translocating oxidoreductase complex subunit A from Vibrio cholerae serotype O1 (strain ATCC 39541 / Classical Ogawa 395 / O395).